We begin with the raw amino-acid sequence, 101 residues long: Small ribosomal subunit protein bS6 (101 aa).

The protein belongs to the bacterial ribosomal protein bS6 family.

Its function is as follows. Binds together with bS18 to 16S ribosomal RNA. The polypeptide is Small ribosomal subunit protein bS6 (Nitratidesulfovibrio vulgaris (strain ATCC 29579 / DSM 644 / CCUG 34227 / NCIMB 8303 / VKM B-1760 / Hildenborough) (Desulfovibrio vulgaris)).